The sequence spans 544 residues: Membrane protein insertase YidC (544 aa).

The next 5 helical transmembrane spans lie at 13–33, 343–363, 409–429, 461–481, and 506–526; these read LSLF…SNIL, WGLS…PLTF, LGGC…YSLV, LYFV…FTQL, and MPIM…IYWI.

It belongs to the OXA1/ALB3/YidC family. Type 1 subfamily. Interacts with the Sec translocase complex via SecD. Specifically interacts with transmembrane segments of nascent integral membrane proteins during membrane integration.

The protein resides in the cell inner membrane. Functionally, required for the insertion and/or proper folding and/or complex formation of integral membrane proteins into the membrane. Involved in integration of membrane proteins that insert both dependently and independently of the Sec translocase complex, as well as at least some lipoproteins. Aids folding of multispanning membrane proteins. This chain is Membrane protein insertase YidC, found in Borreliella burgdorferi (strain ZS7) (Borrelia burgdorferi).